The chain runs to 229 residues: Biosynthetic peptidoglycan transglycosylase (229 aa).

Residues N11–Y31 form a helical membrane-spanning segment.

It belongs to the glycosyltransferase 51 family.

The protein resides in the cell inner membrane. It carries out the reaction [GlcNAc-(1-&gt;4)-Mur2Ac(oyl-L-Ala-gamma-D-Glu-L-Lys-D-Ala-D-Ala)](n)-di-trans,octa-cis-undecaprenyl diphosphate + beta-D-GlcNAc-(1-&gt;4)-Mur2Ac(oyl-L-Ala-gamma-D-Glu-L-Lys-D-Ala-D-Ala)-di-trans,octa-cis-undecaprenyl diphosphate = [GlcNAc-(1-&gt;4)-Mur2Ac(oyl-L-Ala-gamma-D-Glu-L-Lys-D-Ala-D-Ala)](n+1)-di-trans,octa-cis-undecaprenyl diphosphate + di-trans,octa-cis-undecaprenyl diphosphate + H(+). It participates in cell wall biogenesis; peptidoglycan biosynthesis. Functionally, peptidoglycan polymerase that catalyzes glycan chain elongation from lipid-linked precursors. The sequence is that of Biosynthetic peptidoglycan transglycosylase from Caulobacter vibrioides (strain ATCC 19089 / CIP 103742 / CB 15) (Caulobacter crescentus).